A 304-amino-acid polypeptide reads, in one-letter code: Gamma-gliadin B-I (304 aa).

An N-terminal signal peptide occupies residues 1–23 (MKTFLVFALIAVVATSAIAQMET). The disordered stretch occupies residues 32–92 (PWQQQPLPPQ…PFSQQQQPVL (61 aa)). Positions 41–92 (QQSFSQQPPFSQQQQQPLPQQPSFSQQQPPFSQQQPILSQQPPFSQQQQPVL) are enriched in low complexity.

Belongs to the gliadin/glutenin family.

Gliadin is the major seed storage protein in wheat. This Triticum aestivum (Wheat) protein is Gamma-gliadin B-I.